Consider the following 291-residue polypeptide: ATP synthase gamma chain (291 aa).

The protein belongs to the ATPase gamma chain family. F-type ATPases have 2 components, CF(1) - the catalytic core - and CF(0) - the membrane proton channel. CF(1) has five subunits: alpha(3), beta(3), gamma(1), delta(1), epsilon(1). CF(0) has three main subunits: a, b and c.

It localises to the cell membrane. Produces ATP from ADP in the presence of a proton gradient across the membrane. The gamma chain is believed to be important in regulating ATPase activity and the flow of protons through the CF(0) complex. This is ATP synthase gamma chain from Buchnera aphidicola subsp. Baizongia pistaciae (strain Bp).